Reading from the N-terminus, the 332-residue chain is Cell division protein ZipA (332 aa).

The Periplasmic segment spans residues 1–6 (MMQDLR). A helical transmembrane segment spans residues 7–27 (LILIVVGAIAIIALLLHGLWT). The Cytoplasmic segment spans residues 28–332 (SRKERSSLFR…RLREVLENNA (305 aa)). Basic and acidic residues-rich tracts occupy residues 34 to 51 (SLFR…REQS) and 61 to 72 (GEVRVRSAHPED). Residues 34–184 (SLFRDRPAKR…PAVAHEPQPA (151 aa)) form a disordered region. Over residues 98–107 (PAPRAVQPAA) the composition is skewed to low complexity. A compositionally biased stretch (acidic residues) spans 121–136 (DDILLDNYAQEEDDEP). Over residues 155–171 (PAAEPAFHAEPAHQPQP) the composition is skewed to low complexity.

It belongs to the ZipA family. In terms of assembly, interacts with FtsZ via their C-terminal domains.

It localises to the cell inner membrane. In terms of biological role, essential cell division protein that stabilizes the FtsZ protofilaments by cross-linking them and that serves as a cytoplasmic membrane anchor for the Z ring. Also required for the recruitment to the septal ring of downstream cell division proteins. The polypeptide is Cell division protein ZipA (Serratia proteamaculans (strain 568)).